The sequence spans 644 residues: Protein FAM149B1 (644 aa).

Disordered stretches follow at residues 392–490 (NQSD…NTLL), 551–575 (TFRSDTPYHRSFTGIDNIGQGRPGR), and 609–644 (GHFPIGHEEEPDAKASGQARSHNRGGSTARSSRPGL). Residues 395 to 404 (DCRDSEDKVS) are compositionally biased toward basic and acidic residues. The span at 449–459 (PITSSVTQPIT) shows a compositional bias: polar residues. The segment covering 626–644 (QARSHNRGGSTARSSRPGL) has biased composition (polar residues).

Belongs to the FAM149 family.

The sequence is that of Protein FAM149B1 (fam149b1) from Danio rerio (Zebrafish).